The sequence spans 317 residues: Methionyl-tRNA formyltransferase (317 aa).

113–116 (SLLP) contacts (6S)-5,6,7,8-tetrahydrofolate.

The protein belongs to the Fmt family.

It carries out the reaction L-methionyl-tRNA(fMet) + (6R)-10-formyltetrahydrofolate = N-formyl-L-methionyl-tRNA(fMet) + (6S)-5,6,7,8-tetrahydrofolate + H(+). Functionally, attaches a formyl group to the free amino group of methionyl-tRNA(fMet). The formyl group appears to play a dual role in the initiator identity of N-formylmethionyl-tRNA by promoting its recognition by IF2 and preventing the misappropriation of this tRNA by the elongation apparatus. The polypeptide is Methionyl-tRNA formyltransferase (Pseudomonas fluorescens (strain SBW25)).